The primary structure comprises 336 residues: MDDDKLLSGDKADDEEASLEKSLRPQTLAQYIGQARVKHELGVYIEAARKREESLDHVLLYGPPGLGKTTLAMVIANEMQVNIRTTSGPAIEKPGDLVALLNELEPGDILFIDEIHRLPKIVEEMLYSAMEDFFVDIVVGQGPTAHPVHFPLPPFTLIGATTRAGMLSAPLRDRFGIVEHMAYYEVADLEDIVKRTADIFQTSIKPSGAHEIARRSRGTPRIANRLFKRIRDFAEVADQDAIDEAIVARSLTYLRVDDAGLDETDNKLLRTMLEYYDGGPVGLATIAANIGEETDTIAEVVEPYLLQIGFLKRTQRGRVVTIKGYQHLGFPYPENK.

Over residues 1 to 11 (MDDDKLLSGDK) the composition is skewed to basic and acidic residues. The tract at residues 1–21 (MDDDKLLSGDKADDEEASLEK) is disordered. Residues 1–184 (MDDDKLLSGD…FGIVEHMAYY (184 aa)) form a large ATPase domain (RuvB-L) region. ATP-binding positions include Leu-23, Arg-24, Gly-65, Lys-68, Thr-69, Thr-70, 131–133 (EDF), Arg-174, Tyr-184, and Arg-221. Thr-69 contacts Mg(2+). Positions 185 to 255 (EVADLEDIVK…IVARSLTYLR (71 aa)) are small ATPAse domain (RuvB-S). Positions 258 to 336 (DAGLDETDNK…HLGFPYPENK (79 aa)) are head domain (RuvB-H). DNA is bound by residues Arg-313 and Arg-318.

The protein belongs to the RuvB family. In terms of assembly, homohexamer. Forms an RuvA(8)-RuvB(12)-Holliday junction (HJ) complex. HJ DNA is sandwiched between 2 RuvA tetramers; dsDNA enters through RuvA and exits via RuvB. An RuvB hexamer assembles on each DNA strand where it exits the tetramer. Each RuvB hexamer is contacted by two RuvA subunits (via domain III) on 2 adjacent RuvB subunits; this complex drives branch migration. In the full resolvosome a probable DNA-RuvA(4)-RuvB(12)-RuvC(2) complex forms which resolves the HJ.

It localises to the cytoplasm. The enzyme catalyses ATP + H2O = ADP + phosphate + H(+). Functionally, the RuvA-RuvB-RuvC complex processes Holliday junction (HJ) DNA during genetic recombination and DNA repair, while the RuvA-RuvB complex plays an important role in the rescue of blocked DNA replication forks via replication fork reversal (RFR). RuvA specifically binds to HJ cruciform DNA, conferring on it an open structure. The RuvB hexamer acts as an ATP-dependent pump, pulling dsDNA into and through the RuvAB complex. RuvB forms 2 homohexamers on either side of HJ DNA bound by 1 or 2 RuvA tetramers; 4 subunits per hexamer contact DNA at a time. Coordinated motions by a converter formed by DNA-disengaged RuvB subunits stimulates ATP hydrolysis and nucleotide exchange. Immobilization of the converter enables RuvB to convert the ATP-contained energy into a lever motion, pulling 2 nucleotides of DNA out of the RuvA tetramer per ATP hydrolyzed, thus driving DNA branch migration. The RuvB motors rotate together with the DNA substrate, which together with the progressing nucleotide cycle form the mechanistic basis for DNA recombination by continuous HJ branch migration. Branch migration allows RuvC to scan DNA until it finds its consensus sequence, where it cleaves and resolves cruciform DNA. This is Holliday junction branch migration complex subunit RuvB from Lactiplantibacillus plantarum (strain ATCC BAA-793 / NCIMB 8826 / WCFS1) (Lactobacillus plantarum).